We begin with the raw amino-acid sequence, 290 residues long: D-tagatose 3-epimerase (290 aa).

Residue Cys66 coordinates substrate. Glu152 (proton donor/acceptor) is an active-site residue. Glu152 contributes to the Mn(2+) binding site. Substrate contacts are provided by residues Glu158 and 185–188 (DTFH). Mn(2+) is bound by residues Asp185 and His211. Residue Arg217 coordinates substrate. The active-site Proton donor/acceptor is the Glu246. Glu246 is a Mn(2+) binding site.

Belongs to the hyi family. As to quaternary structure, homodimer. Requires Mn(2+) as cofactor.

The catalysed reaction is keto-D-tagatose = keto-D-sorbose. The enzyme catalyses D-allulose = keto-D-fructose. It catalyses the reaction D-ribulose = D-xylulose. Strongly inhibited (about 90% of the enzyme activity) by Ag(+), Hg(2+) and p-chloromercuribenzoic acid. Cu(2+) and Zn(2+) inhibit about 60% of the enzyme activity. In terms of biological role, catalyzes the epimerization of various ketoses at the C(3) position. It is able to interconvert D-tagatose and D-ribulose to D-sorbose and D-xylulose, respectively. The enzyme is also able to accept other ketopentoses such as D-psicose with lower efficiency. The chain is D-tagatose 3-epimerase from Pseudomonas cichorii.